Here is a 555-residue protein sequence, read N- to C-terminus: Undecaprenyl phosphate-alpha-4-amino-4-deoxy-L-arabinose arabinosyl transferase (555 aa).

A run of 11 helical transmembrane segments spans residues 6–26, 87–107, 116–136, 178–198, 206–226, 257–277, 293–313, 315–335, 351–371, 384–404, and 411–431; these read GSWAILLAIFFALVYLIPLNG, FGSVFSTGMTALLVFALAMLM, LATLIFLSMVLVFSIGTYSVL, FMTKGFLALAVPVIAVIPIVI, LLIYGPVAIVVAVLLSLPWAL, APFWYYVPVLMAAVLPWLALL, ELFFLLSWVMMPLIFFSIAKG, LPTYILPCMAPLALLMAAYAE, VLNGLFGLICILALVVLGSGL, PKIVIGIIAFAGWLLFAVVSV, and WSWAAACPLLLCLLIGYAIPQ.

Belongs to the glycosyltransferase 83 family.

It localises to the cell inner membrane. It catalyses the reaction 4-amino-4-deoxy-alpha-L-arabinopyranosyl di-trans,octa-cis-undecaprenyl phosphate + lipid IVA = lipid IIA + di-trans,octa-cis-undecaprenyl phosphate.. It functions in the pathway lipopolysaccharide metabolism; 4-amino-4-deoxy-beta-L-arabinose-lipid A biosynthesis. Functionally, catalyzes the transfer of the L-Ara4N moiety of the glycolipid undecaprenyl phosphate-alpha-L-Ara4N to lipid A. The modified arabinose is attached to lipid A and is required for resistance to polymyxin and cationic antimicrobial peptides. The sequence is that of Undecaprenyl phosphate-alpha-4-amino-4-deoxy-L-arabinose arabinosyl transferase from Serratia proteamaculans (strain 568).